Here is a 271-residue protein sequence, read N- to C-terminus: Glutamate racemase (271 aa).

Residues 10-11 and 42-43 contribute to the substrate site; these read DS and YG. Residue cysteine 73 is the Proton donor/acceptor of the active site. 74–75 provides a ligand contact to substrate; it reads NT. The Proton donor/acceptor role is filled by cysteine 183. 184–185 is a substrate binding site; sequence TH.

The protein belongs to the aspartate/glutamate racemases family.

It catalyses the reaction L-glutamate = D-glutamate. It participates in cell wall biogenesis; peptidoglycan biosynthesis. In terms of biological role, provides the (R)-glutamate required for cell wall biosynthesis. This is Glutamate racemase from Streptococcus thermophilus (strain CNRZ 1066).